Reading from the N-terminus, the 381-residue chain is Endophilin-A homolog (381 aa).

The segment at 1–21 (MSLSGLRKQFNKANQYLSETM) is membrane-binding amphipathic helix. Positions 18 to 247 (SETMGAAEPT…LGHRIKDAAA (230 aa)) constitute a BAR domain. A coiled-coil region spans residues 170-238 (CKKRQQRRDD…QCLENLQQQL (69 aa)). The disordered stretch occupies residues 246 to 323 (AARPREEHVP…PPPLSQQQKP (78 aa)). The span at 260–271 (ANESRTPRSSFR) shows a compositional bias: polar residues. The segment covering 305-317 (YQGPPPGGLPPPL) has biased composition (pro residues). An SH3 domain is found at 320–379 (QQKPQCRALFDFDAQSEGELDFKEGTLIELVSQIDENWYEGRVNGKTGLFPVTYVQVLVP).

The protein belongs to the endophilin family. In terms of assembly, may form a homodimer (via the BAR domain). As to expression, expressed in neurons and posterior intestine.

The protein resides in the synapse. It is found in the cytoplasmic vesicle. Its subcellular location is the secretory vesicle. It localises to the synaptic vesicle. The protein localises to the membrane. Involved in synaptic vesicle (SV) recycling in neurons probably by regulating clathrin-mediated endocytosis. By controlling SV endocytosis, regulates the rate of excitatory postsynaptic currents (EPSCs) at neuromuscular junctions and thus locomotion. In a similar manner, involved in necrotic neuronal cell death induced by abnormal hyperactivation of ion channels. Plays a minor role in responses to mechanical stimuli. Plays a minor role in unc-26/synaptojanin localization to synapses. The chain is Endophilin-A homolog from Caenorhabditis elegans.